The sequence spans 327 residues: Ornithine carbamoyltransferase 2, anabolic (327 aa).

Carbamoyl phosphate contacts are provided by residues arginine 109 and 136-139 (HPTQ). Residues asparagine 168, aspartate 232, and 236–237 (SM) each bind L-ornithine. Residues 273-274 (CL) and arginine 313 contribute to the carbamoyl phosphate site.

It belongs to the aspartate/ornithine carbamoyltransferase superfamily. OTCase family. As to quaternary structure, homotrimer.

Its subcellular location is the cytoplasm. It catalyses the reaction carbamoyl phosphate + L-ornithine = L-citrulline + phosphate + H(+). It functions in the pathway amino-acid biosynthesis; L-arginine biosynthesis; L-arginine from L-ornithine and carbamoyl phosphate: step 1/3. Plays an important role in the survival and pathogenicity of P.syringae. Phaseolotoxin is a virulence factor that inhibits the catalysis of the host OTCase. Phaseolotoxin-producing bacteria do not suffer autointoxication because they possess the anabolic OTCase ArgK which can function even in the presence of phaseolotoxin. Reversibly catalyzes the transfer of the carbamoyl group from carbamoyl phosphate (CP) to the N(epsilon) atom of ornithine (ORN) to produce L-citrulline, which is a substrate for argininosuccinate synthetase, the enzyme involved in the final step in arginine biosynthesis. The polypeptide is Ornithine carbamoyltransferase 2, anabolic (Pseudomonas savastanoi pv. phaseolicola (Pseudomonas syringae pv. phaseolicola)).